A 214-amino-acid polypeptide reads, in one-letter code: Adenylate kinase (214 aa).

Residue 11–16 (GTGKGT) participates in ATP binding. The interval 31–61 (SSGDLFRFYAKEEKTALAEEIKSYINNGLYV) is NMP. AMP contacts are provided by residues S32, R37, 59–61 (LYV), 87–90 (GYPR), and Q94. The LID stretch occupies residues 124-163 (LRRSCPQCKRIYNINSVDFKPKVANLCDLCKVELIHRKDD). Position 125 (R125) interacts with ATP. Zn(2+) is bound by residues C128 and C131. 134–135 (IY) provides a ligand contact to ATP. Positions 150 and 153 each coordinate Zn(2+). Residues R160 and R171 each contribute to the AMP site. K199 is an ATP binding site.

Belongs to the adenylate kinase family. Monomer.

Its subcellular location is the cytoplasm. It catalyses the reaction AMP + ATP = 2 ADP. It participates in purine metabolism; AMP biosynthesis via salvage pathway; AMP from ADP: step 1/1. Its function is as follows. Catalyzes the reversible transfer of the terminal phosphate group between ATP and AMP. Plays an important role in cellular energy homeostasis and in adenine nucleotide metabolism. The protein is Adenylate kinase of Mycoplasmoides gallisepticum (strain R(low / passage 15 / clone 2)) (Mycoplasma gallisepticum).